Consider the following 359-residue polypeptide: DNA replication and repair protein RecF (359 aa).

Residue 30-37 (GPNGSGKT) participates in ATP binding.

It belongs to the RecF family.

It is found in the cytoplasm. Its function is as follows. The RecF protein is involved in DNA metabolism; it is required for DNA replication and normal SOS inducibility. RecF binds preferentially to single-stranded, linear DNA. It also seems to bind ATP. This Vibrio vulnificus (strain CMCP6) protein is DNA replication and repair protein RecF.